Reading from the N-terminus, the 278-residue chain is Chitosanase (278 aa).

Residues 1 to 40 (MHSQHRTARIALAVVLTAIPASLATAGVGYASTQASTAVK) form the signal peptide. The active-site Proton donor is the glutamate 62. The active-site Nucleophile is aspartate 80.

It belongs to the glycosyl hydrolase 46 family.

The protein resides in the secreted. It carries out the reaction Endohydrolysis of beta-(1-&gt;4)-linkages between D-glucosamine residues in a partly acetylated chitosan.. Its function is as follows. Aids in the defense against invading fungal pathogens by degrading their cell wall chitosan. This chain is Chitosanase (csn), found in Streptomyces sp. (strain N174).